The following is a 375-amino-acid chain: tRNA-specific 2-thiouridylase MnmA (375 aa).

Residues 16-23 and Met-42 each bind ATP; that span reads GMSGGVDS. Residues 102–104 are interaction with target base in tRNA; that stretch reads NPD. Residue Cys-107 is the Nucleophile of the active site. Cys-107 and Cys-203 are oxidised to a cystine. Gly-131 is an ATP binding site. The interval 153–155 is interaction with tRNA; sequence KDQ. The active-site Cysteine persulfide intermediate is Cys-203. Residues 315 to 316 are interaction with tRNA; that stretch reads RY.

It belongs to the MnmA/TRMU family.

It localises to the cytoplasm. It carries out the reaction S-sulfanyl-L-cysteinyl-[protein] + uridine(34) in tRNA + AH2 + ATP = 2-thiouridine(34) in tRNA + L-cysteinyl-[protein] + A + AMP + diphosphate + H(+). Catalyzes the 2-thiolation of uridine at the wobble position (U34) of tRNA, leading to the formation of s(2)U34. This is tRNA-specific 2-thiouridylase MnmA from Pseudomonas aeruginosa (strain UCBPP-PA14).